We begin with the raw amino-acid sequence, 429 residues long: Serine--tRNA ligase (429 aa).

Residue 235–237 participates in L-serine binding; sequence TAE. An ATP-binding site is contributed by 266–268; that stretch reads RSE. Residue Glu289 coordinates L-serine. ATP is bound at residue 353 to 356; it reads EISS. Ser389 contributes to the L-serine binding site.

It belongs to the class-II aminoacyl-tRNA synthetase family. Type-1 seryl-tRNA synthetase subfamily. As to quaternary structure, homodimer. The tRNA molecule binds across the dimer.

The protein localises to the cytoplasm. The enzyme catalyses tRNA(Ser) + L-serine + ATP = L-seryl-tRNA(Ser) + AMP + diphosphate + H(+). It catalyses the reaction tRNA(Sec) + L-serine + ATP = L-seryl-tRNA(Sec) + AMP + diphosphate + H(+). It participates in aminoacyl-tRNA biosynthesis; selenocysteinyl-tRNA(Sec) biosynthesis; L-seryl-tRNA(Sec) from L-serine and tRNA(Sec): step 1/1. Catalyzes the attachment of serine to tRNA(Ser). Is also able to aminoacylate tRNA(Sec) with serine, to form the misacylated tRNA L-seryl-tRNA(Sec), which will be further converted into selenocysteinyl-tRNA(Sec). The sequence is that of Serine--tRNA ligase from Haemophilus influenzae (strain PittGG).